A 372-amino-acid chain; its full sequence is tRNA-specific 2-thiouridylase MnmA (372 aa).

ATP is bound by residues 16-23 (GMSGGVDS) and Met-42. An interaction with target base in tRNA region spans residues 102 to 104 (NPD). The active-site Nucleophile is the Cys-107. A disulfide bridge connects residues Cys-107 and Cys-205. Residue Gly-132 coordinates ATP. The interaction with tRNA stretch occupies residues 155–157 (KDQ). Residue Cys-205 is the Cysteine persulfide intermediate of the active site. Positions 317 to 318 (RY) are interaction with tRNA.

Belongs to the MnmA/TRMU family.

The protein resides in the cytoplasm. It carries out the reaction S-sulfanyl-L-cysteinyl-[protein] + uridine(34) in tRNA + AH2 + ATP = 2-thiouridine(34) in tRNA + L-cysteinyl-[protein] + A + AMP + diphosphate + H(+). Functionally, catalyzes the 2-thiolation of uridine at the wobble position (U34) of tRNA, leading to the formation of s(2)U34. The chain is tRNA-specific 2-thiouridylase MnmA from Shewanella denitrificans (strain OS217 / ATCC BAA-1090 / DSM 15013).